The primary structure comprises 332 residues: 2,3-diketo-L-gulonate reductase (332 aa).

His-44 serves as the catalytic Proton donor. Residues 168 to 174 (ITMVDMS), 224 to 225 (WK), and 304 to 306 (GHE) each bind NAD(+).

It belongs to the LDH2/MDH2 oxidoreductase family. DlgD subfamily. Homodimer.

It localises to the cytoplasm. The enzyme catalyses 3-dehydro-L-gulonate + NAD(+) = 2,3-dioxo-L-gulonate + NADH + H(+). It catalyses the reaction 3-dehydro-L-gulonate + NADP(+) = 2,3-dioxo-L-gulonate + NADPH + H(+). Functionally, catalyzes the reduction of 2,3-diketo-L-gulonate in the presence of NADH, to form 3-keto-L-gulonate. The protein is 2,3-diketo-L-gulonate reductase of Pasteurella multocida (strain Pm70).